The following is a 448-amino-acid chain: Glucose-6-phosphate isomerase (448 aa).

E288 functions as the Proton donor in the catalytic mechanism. Active-site residues include H309 and K423.

The protein belongs to the GPI family.

It localises to the cytoplasm. The enzyme catalyses alpha-D-glucose 6-phosphate = beta-D-fructose 6-phosphate. It functions in the pathway carbohydrate biosynthesis; gluconeogenesis. Its pathway is carbohydrate degradation; glycolysis; D-glyceraldehyde 3-phosphate and glycerone phosphate from D-glucose: step 2/4. In terms of biological role, catalyzes the reversible isomerization of glucose-6-phosphate to fructose-6-phosphate. The polypeptide is Glucose-6-phosphate isomerase (Fusobacterium nucleatum subsp. nucleatum (strain ATCC 25586 / DSM 15643 / BCRC 10681 / CIP 101130 / JCM 8532 / KCTC 2640 / LMG 13131 / VPI 4355)).